A 346-amino-acid polypeptide reads, in one-letter code: Putative transmembrane protein ORF346 (346 aa).

6 helical membrane-spanning segments follow: residues 67–87 (LPII…CIVY), 104–124 (IINP…VGLT), 134–154 (PPYL…SGIY), 156–176 (AIGD…GLFI), 181–201 (IILY…LCLS), and 219–241 (YPFS…LGSY). Positions 294-346 (SEYPHSENGSGGSGGSGSGSGSGGSGSGGNSGSGGSGSGSSGSGGNSGSGNNG) are disordered. The segment covering 302-346 (GSGGSGGSGSGSGSGGSGSGGNSGSGGSGSGSSGSGGNSGSGNNG) has biased composition (gly residues).

Its subcellular location is the host membrane. This chain is Putative transmembrane protein ORF346, found in Acidianus bottle-shaped virus (isolate Italy/Pozzuoli) (ABV).